The primary structure comprises 292 residues: Proteasome subunit beta (292 aa).

The propeptide at 1 to 62 (MSESLGSVPG…HRAADDIPHG (62 aa)) is removed in mature form; by autocatalysis. Catalysis depends on Thr-63, which acts as the Nucleophile.

The protein belongs to the peptidase T1B family. As to quaternary structure, the 20S proteasome core is composed of 14 alpha and 14 beta subunits that assemble into four stacked heptameric rings, resulting in a barrel-shaped structure. The two inner rings, each composed of seven catalytic beta subunits, are sandwiched by two outer rings, each composed of seven alpha subunits. The catalytic chamber with the active sites is on the inside of the barrel. Has a gated structure, the ends of the cylinder being occluded by the N-termini of the alpha-subunits. Is capped by the proteasome-associated ATPase, ARC.

It is found in the cytoplasm. It carries out the reaction Cleavage of peptide bonds with very broad specificity.. The protein operates within protein degradation; proteasomal Pup-dependent pathway. The formation of the proteasomal ATPase ARC-20S proteasome complex, likely via the docking of the C-termini of ARC into the intersubunit pockets in the alpha-rings, may trigger opening of the gate for substrate entry. Interconversion between the open-gate and close-gate conformations leads to a dynamic regulation of the 20S proteasome proteolysis activity. In terms of biological role, component of the proteasome core, a large protease complex with broad specificity involved in protein degradation. The chain is Proteasome subunit beta from Gordonia bronchialis (strain ATCC 25592 / DSM 43247 / BCRC 13721 / JCM 3198 / KCTC 3076 / NBRC 16047 / NCTC 10667) (Rhodococcus bronchialis).